The primary structure comprises 105 residues: Integration host factor subunit alpha (105 aa).

This sequence belongs to the bacterial histone-like protein family. As to quaternary structure, heterodimer of an alpha and a beta chain.

This protein is one of the two subunits of integration host factor, a specific DNA-binding protein that functions in genetic recombination as well as in transcriptional and translational control. This is Integration host factor subunit alpha from Rhodospirillum rubrum (strain ATCC 11170 / ATH 1.1.1 / DSM 467 / LMG 4362 / NCIMB 8255 / S1).